We begin with the raw amino-acid sequence, 195 residues long: Holliday junction branch migration complex subunit RuvA (195 aa).

The interval 1–61 (MYEYFEGIIS…DTGITLYGFQ (61 aa)) is domain I. Residues 62-140 (DQDDKGLFLK…DYVARLDKPE (79 aa)) are domain II. The tract at residues 141–146 (NGEEIS) is flexible linker. The domain III stretch occupies residues 146–195 (SPALNDALLALIALGYTQKEVDRITPKLVEIEADTADQYIKKGLALLLKK).

The protein belongs to the RuvA family. In terms of assembly, homotetramer. Forms an RuvA(8)-RuvB(12)-Holliday junction (HJ) complex. HJ DNA is sandwiched between 2 RuvA tetramers; dsDNA enters through RuvA and exits via RuvB. An RuvB hexamer assembles on each DNA strand where it exits the tetramer. Each RuvB hexamer is contacted by two RuvA subunits (via domain III) on 2 adjacent RuvB subunits; this complex drives branch migration. In the full resolvosome a probable DNA-RuvA(4)-RuvB(12)-RuvC(2) complex forms which resolves the HJ.

It is found in the cytoplasm. In terms of biological role, the RuvA-RuvB-RuvC complex processes Holliday junction (HJ) DNA during genetic recombination and DNA repair, while the RuvA-RuvB complex plays an important role in the rescue of blocked DNA replication forks via replication fork reversal (RFR). RuvA specifically binds to HJ cruciform DNA, conferring on it an open structure. The RuvB hexamer acts as an ATP-dependent pump, pulling dsDNA into and through the RuvAB complex. HJ branch migration allows RuvC to scan DNA until it finds its consensus sequence, where it cleaves and resolves the cruciform DNA. In Lactobacillus acidophilus (strain ATCC 700396 / NCK56 / N2 / NCFM), this protein is Holliday junction branch migration complex subunit RuvA.